The chain runs to 246 residues: MKYDIIGDIHGCFQEFQDLTKKLGYNWNSDLPIHPDQRKLAFVGDITDRGPHSLRMIEIVWELVINKKVAYYAPGNHCNKLYRFFLGRNVTIAHGLETTVAEYEALPSHQQNMIKEKFITLYEQSPLYHVLDEKRLIVCHAGIRQDYIGRQDKKVQTFVLYGDITGEKHADGSPVRRDWAKEYKGTAWVVYGHTPVKEPRFVNHTVNIDTGAVFGGKLTGLRYPEMETVSVPSSLPFVPEKFRPIS.

It belongs to the PrpE family. The cofactor is Ni(2+).

It carries out the reaction P(1),P(4)-bis(5'-guanosyl) tetraphosphate + H2O = GMP + GTP + 2 H(+). Functionally, asymmetrically hydrolyzes Ap4p to yield AMP and ATP. The polypeptide is Bis(5'-nucleosyl)-tetraphosphatase PrpE [asymmetrical] (Bacillus cereus (strain ATCC 10987 / NRS 248)).